The sequence spans 336 residues: Zinc-type alcohol dehydrogenase-like protein SE_1777 (336 aa).

This sequence belongs to the zinc-containing alcohol dehydrogenase family. Quinone oxidoreductase subfamily.

The protein is Zinc-type alcohol dehydrogenase-like protein SE_1777 of Staphylococcus epidermidis (strain ATCC 12228 / FDA PCI 1200).